The following is a 494-amino-acid chain: UDP-glucose 6-dehydrogenase (494 aa).

Residues 11-16 (GAGYVG), D36, R41, and 89-93 (VNTPT) each bind NAD(+). Residues 88 to 110 (SVNTPTKTYGMGKGRAADLKYIE) form a disordered region. K107 is modified (N6-acetyllysine). The allosteric switch region stretch occupies residues 129 to 135 (KSTVPVR). Residue 130–132 (STV) participates in NAD(+) binding. E161 acts as the Proton donor/acceptor in catalysis. Substrate-binding positions include 161-165 (EFLAE), 220-224 (KLAAN), R260, and 267-273 (KASVGFG). E165 is a binding site for NAD(+). Catalysis depends on K220, which acts as the Proton donor/acceptor. C276 functions as the Nucleophile in the catalytic mechanism. Residue 276 to 279 (CFQK) coordinates NAD(+). An important for formation of active hexamer structure region spans residues 321-325 (SLFNT). Position 338 to 339 (338 to 339 (FK)) interacts with substrate. R346 lines the NAD(+) pocket. R442 is a substrate binding site. The interval 466 to 494 (VSSKRIPYAPSGEIPKFSLQDPPNKKPKV) is disordered. S476 is subject to Phosphoserine.

It belongs to the UDP-glucose/GDP-mannose dehydrogenase family. As to quaternary structure, homohexamer.

It catalyses the reaction UDP-alpha-D-glucose + 2 NAD(+) + H2O = UDP-alpha-D-glucuronate + 2 NADH + 3 H(+). The protein operates within nucleotide-sugar biosynthesis; UDP-alpha-D-glucuronate biosynthesis; UDP-alpha-D-glucuronate from UDP-alpha-D-glucose: step 1/1. Its activity is regulated as follows. UDP-alpha-D-xylose (UDX) acts as a feedback inhibitor. It binds at the same site as the substrate, but functions as allosteric inhibitor by triggering a conformation change that disrupts the active hexameric ring structure and gives rise to an inactive, horseshoe-shaped hexamer. Its function is as follows. Catalyzes the formation of UDP-alpha-D-glucuronate, a constituent of complex glycosaminoglycans. Required for the biosynthesis of chondroitin sulfate and heparan sulfate. Required for embryonic development via its role in the biosynthesis of glycosaminoglycans. Required for proper brain and neuronal development. The protein is UDP-glucose 6-dehydrogenase (UGDH) of Pongo abelii (Sumatran orangutan).